A 428-amino-acid chain; its full sequence is MRALCLLCWAVLLNLVRACPEPCDCGEKYGFQIADCAYRDLEGVPPGFPANVTTLSLSANRLPGLPEGAFREVPLLQSLWLAHNEIRSVAIGALAPLSHLKSLDLSHNLLSEFAWSDLHNLSALQLLKMDSNELAFIPRDAFSSLSALRSLQLNHNRLHALAEGTFAPLTALSHLQINDNPFDCTCGIVWFKTWALASAVSIPEQDNIACTTPHVLKGIPLGRLPPLPCSAPSVQLSYQPSQDGAELRPGFVLALHCDVDGQPVPQLHWHIHTPGGTVEIASPNVGTDGRALPGALATSGQPRFQAFANGSLLIPDFGKLEEGTYSCLATNELGSAESSVNVALATPGEGGEDAVGHKFHGKAVEGKGCYTVDNEVQPSGPEDNVVIIYLSRAGPPEAAIAADGRPAQQFSGILLLGQSLLVLSFFYF.

Positions 1–18 (MRALCLLCWAVLLNLVRA) are cleaved as a signal peptide. The 32-residue stretch at 19–50 (CPEPCDCGEKYGFQIADCAYRDLEGVPPGFPA) folds into the LRRNT domain. N-linked (GlcNAc...) asparagine glycosylation occurs at Asn51. LRR repeat units follow at residues 51–72 (NVTT…AFRE), 75–98 (LLQS…APLS), 99–122 (HLKS…HNLS), 123–144 (ALQL…AFSS), and 147–168 (ALRS…TFAP). One can recognise an LRRCT domain in the interval 180 to 231 (NPFDCTCGIVWFKTWALASAVSIPEQDNIACTTPHVLKGIPLGRLPPLPCSA). Positions 232 to 343 (PSVQLSYQPS…GSAESSVNVA (112 aa)) constitute an Ig-like domain. A disulfide bridge connects residues Cys257 and Cys327. Asn309 is a glycosylation site (N-linked (GlcNAc...) asparagine).

As to expression, detected in thyroid, heart, retina and spinal cord.

The protein localises to the secreted. In Mus musculus (Mouse), this protein is Immunoglobulin superfamily containing leucine-rich repeat protein (Islr).